A 178-amino-acid polypeptide reads, in one-letter code: Ribosome maturation factor RimM (178 aa).

Positions 95–174 constitute a PRC barrel domain; sequence EGQHFWFNVI…IVHVKDAKDI (80 aa).

Belongs to the RimM family. As to quaternary structure, binds ribosomal protein uS19.

It is found in the cytoplasm. An accessory protein needed during the final step in the assembly of 30S ribosomal subunit, possibly for assembly of the head region. Essential for efficient processing of 16S rRNA. May be needed both before and after RbfA during the maturation of 16S rRNA. It has affinity for free ribosomal 30S subunits but not for 70S ribosomes. This is Ribosome maturation factor RimM from Sulfurovum sp. (strain NBC37-1).